Here is a 373-residue protein sequence, read N- to C-terminus: MSEDTSQPTDQQAGTALRRGWTTGACAAAAARAAFTGLVSGSFPDPVTIRLPRDRSPAFALAVHACGDGWARAGVIKDAGDDPDVTHGALVSVTARPGAPGRGVQLRAGPGVGTVRRSGLPVAAGEPAINPGPRGYIEQGIAEAAAALSAPTDVTLELAIEDGERLAAQTLNPRLGIEGGLSVLGTTGLLVPFSCAAWIDAIQRGIDVARAAGIEHVAGSTGRTSEQAVQAYHQLPDEALIDMGDFVGGMLKYLRRYPVPRVTIAGGVAKITKLAQGFLDVHSRRGQADLAALAETAGRLGADATCREVMATANTVAEAFDRAQAAGLPLGDAVAREAQQTALNLIDPACSEVEVLLFDRRGQRVGRAGWARD.

Belongs to the CbiD family.

The catalysed reaction is Co-precorrin-5B + S-adenosyl-L-methionine = Co-precorrin-6A + S-adenosyl-L-homocysteine. It participates in cofactor biosynthesis; adenosylcobalamin biosynthesis; cob(II)yrinate a,c-diamide from sirohydrochlorin (anaerobic route): step 6/10. Functionally, catalyzes the methylation of C-1 in cobalt-precorrin-5B to form cobalt-precorrin-6A. The chain is Cobalt-precorrin-5B C(1)-methyltransferase from Halorhodospira halophila (strain DSM 244 / SL1) (Ectothiorhodospira halophila (strain DSM 244 / SL1)).